A 93-amino-acid polypeptide reads, in one-letter code: UPF0298 protein lwe2074 (93 aa).

The protein belongs to the UPF0298 family.

It localises to the cytoplasm. The sequence is that of UPF0298 protein lwe2074 from Listeria welshimeri serovar 6b (strain ATCC 35897 / DSM 20650 / CCUG 15529 / CIP 8149 / NCTC 11857 / SLCC 5334 / V8).